We begin with the raw amino-acid sequence, 504 residues long: Cytochrome P450 4A2 (504 aa).

Residues 1-4 constitute a propeptide that is removed on maturation; that stretch reads MGFS. Heme is bound at residue Glu-315. Ser-434 carries the post-translational modification Phosphoserine. Residue Cys-451 coordinates heme.

Belongs to the cytochrome P450 family. Requires heme as cofactor.

The protein localises to the endoplasmic reticulum membrane. It is found in the microsome membrane. It carries out the reaction an omega-methyl-long-chain fatty acid + reduced [NADPH--hemoprotein reductase] + O2 = an omega-hydroxy-long-chain fatty acid + oxidized [NADPH--hemoprotein reductase] + H2O + H(+). The catalysed reaction is dodecanoate + reduced [NADPH--hemoprotein reductase] + O2 = (11R)-hydroxydodecanoate + oxidized [NADPH--hemoprotein reductase] + H2O + H(+). The enzyme catalyses dodecanoate + reduced [NADPH--hemoprotein reductase] + O2 = 12-hydroxydodecanoate + oxidized [NADPH--hemoprotein reductase] + H2O + H(+). It catalyses the reaction tetradecanoate + reduced [NADPH--hemoprotein reductase] + O2 = 14-hydroxytetradecanoate + oxidized [NADPH--hemoprotein reductase] + H2O + H(+). It carries out the reaction hexadecanoate + reduced [NADPH--hemoprotein reductase] + O2 = 16-hydroxyhexadecanoate + oxidized [NADPH--hemoprotein reductase] + H2O + H(+). Its pathway is lipid metabolism; fatty acid metabolism. In terms of biological role, a cytochrome P450 monooxygenase that catalyzes omega and omega-1 hydroxylation of saturated fatty acids. Exhibits preferential omega versus omega-1 regioselectivity and (R) versus (S) stereoselectivity for hydroxylation of lauric and myristic acids. Has low activity toward palmitic acid. Mechanistically, uses molecular oxygen inserting one oxygen atom into a substrate, and reducing the second into a water molecule, with two electrons provided by NADPH via cytochrome P450 reductase (CPR; NADPH-ferrihemoprotein reductase). The chain is Cytochrome P450 4A2 from Rattus norvegicus (Rat).